The following is a 432-amino-acid chain: PC-esterase domain-containing protein 1B (432 aa).

Disordered stretches follow at residues 273 to 312 and 407 to 432; these read WESS…SPGL and GPYM…SRPQ. The segment covering 285–294 has biased composition (polar residues); the sequence is QDNIGPQFAQ. Residues 296-312 show a composition bias toward pro residues; that stretch reads PPYPFPRPPPLLPSPGL.

This sequence belongs to the PC-esterase family.

In Rattus norvegicus (Rat), this protein is PC-esterase domain-containing protein 1B (Pced1b).